The sequence spans 280 residues: Coiled-coil domain-containing protein 106 (280 aa).

Residues 63–101 are a coiled coil; the sequence is TQLHMALERNSWLQKRIEDLEEERDFLRCQLDKFISSAR. The span at 103–121 shows a compositional bias: basic and acidic residues; the sequence is EAEDHCRMKPGPRRMEGDS. Residues 103–176 form a disordered region; it reads EAEDHCRMKP…KPKARERQRV (74 aa). S130 carries the phosphoserine modification. A compositionally biased stretch (low complexity) spans 133–146; the sequence is ESAASSLSGASEEG. The Bipartite nuclear localization signal motif lies at 151–164; the sequence is RRRQKQKGGASRRR. Basic residues predominate over residues 152–168; it reads RRQKQKGGASRRRFGKP.

In terms of assembly, interacts with p53/TP53.

The protein resides in the nucleus. Its function is as follows. Promotes the degradation of p53/TP53 protein and inhibits its transactivity. In Homo sapiens (Human), this protein is Coiled-coil domain-containing protein 106 (CCDC106).